Reading from the N-terminus, the 302-residue chain is L-aminoadipate-semialdehyde dehydrogenase-phosphopantetheinyl transferase (302 aa).

CoA is bound by residues Arg-44, Arg-83–Lys-88, and Asn-105–His-108. Mg(2+) contacts are provided by Asp-126 and Glu-178. Residue Glu-178–Lys-182 participates in CoA binding.

The protein belongs to the P-Pant transferase superfamily. AcpS family. Monomer. It depends on Mg(2+) as a cofactor.

It localises to the cytoplasm. The protein resides in the cytosol. The enzyme catalyses apo-[ACP] + CoA = holo-[ACP] + adenosine 3',5'-bisphosphate + H(+). It catalyses the reaction apo-[ACP] + acetyl-CoA = acetyl-[ACP] + adenosine 3',5'-bisphosphate + H(+). Its function is as follows. Catalyzes the post-translational modification of target proteins by phosphopantetheine. Can transfer the 4'-phosphopantetheine moiety from coenzyme A, regardless of whether the CoA is presented in the free thiol form or as an acetyl thioester, to a serine residue of a broad range of acceptors. This chain is L-aminoadipate-semialdehyde dehydrogenase-phosphopantetheinyl transferase (aasdhppt), found in Xenopus laevis (African clawed frog).